The sequence spans 291 residues: Nucleotide-binding protein LMHCC_0126 (291 aa).

13–20 (GMSGAGKT) serves as a coordination point for ATP. GTP is bound at residue 63 to 66 (DLRG).

Belongs to the RapZ-like family.

Functionally, displays ATPase and GTPase activities. The protein is Nucleotide-binding protein LMHCC_0126 of Listeria monocytogenes serotype 4a (strain HCC23).